A 253-amino-acid chain; its full sequence is 2-C-methyl-D-erythritol 4-phosphate cytidylyltransferase (253 aa).

Belongs to the IspD/TarI cytidylyltransferase family. IspD subfamily.

The catalysed reaction is 2-C-methyl-D-erythritol 4-phosphate + CTP + H(+) = 4-CDP-2-C-methyl-D-erythritol + diphosphate. Its pathway is isoprenoid biosynthesis; isopentenyl diphosphate biosynthesis via DXP pathway; isopentenyl diphosphate from 1-deoxy-D-xylulose 5-phosphate: step 2/6. Its function is as follows. Catalyzes the formation of 4-diphosphocytidyl-2-C-methyl-D-erythritol from CTP and 2-C-methyl-D-erythritol 4-phosphate (MEP). This is 2-C-methyl-D-erythritol 4-phosphate cytidylyltransferase from Idiomarina loihiensis (strain ATCC BAA-735 / DSM 15497 / L2-TR).